We begin with the raw amino-acid sequence, 359 residues long: Chorismate synthase (359 aa).

NADP(+) is bound at residue Arg-47. FMN is bound by residues 123–125, Gly-283, 298–302, and Arg-326; these read RSS and KPTSS.

This sequence belongs to the chorismate synthase family. In terms of assembly, homotetramer. FMNH2 is required as a cofactor.

The catalysed reaction is 5-O-(1-carboxyvinyl)-3-phosphoshikimate = chorismate + phosphate. It participates in metabolic intermediate biosynthesis; chorismate biosynthesis; chorismate from D-erythrose 4-phosphate and phosphoenolpyruvate: step 7/7. Catalyzes the anti-1,4-elimination of the C-3 phosphate and the C-6 proR hydrogen from 5-enolpyruvylshikimate-3-phosphate (EPSP) to yield chorismate, which is the branch point compound that serves as the starting substrate for the three terminal pathways of aromatic amino acid biosynthesis. This reaction introduces a second double bond into the aromatic ring system. The sequence is that of Chorismate synthase from Chlamydia abortus (strain DSM 27085 / S26/3) (Chlamydophila abortus).